Consider the following 450-residue polypeptide: Chromosomal replication initiator protein DnaA (450 aa).

Positions 1 to 79 (MKDSYFDLNT…MEYAYDVAHD (79 aa)) are domain I, interacts with DnaA modulators. Positions 79–112 (DFFKPELKVIKVVANPVNNQKSNQSNSDFVATDY) are domain II. The segment at 113–329 (QLNQNFTFDT…GAFNTLTLMA (217 aa)) is domain III, AAA+ region. ATP-binding residues include G157, G159, K160, and T161. The domain IV, binds dsDNA stretch occupies residues 330–450 (RAGRPINVSN…NLSTKIKEKS (121 aa)).

It belongs to the DnaA family. As to quaternary structure, oligomerizes as a right-handed, spiral filament on DNA at oriC.

It localises to the cytoplasm. Functionally, plays an essential role in the initiation and regulation of chromosomal replication. ATP-DnaA binds to the origin of replication (oriC) to initiate formation of the DNA replication initiation complex once per cell cycle. Binds the DnaA box (a 9 base pair repeat at the origin) and separates the double-stranded (ds)DNA. Forms a right-handed helical filament on oriC DNA; dsDNA binds to the exterior of the filament while single-stranded (ss)DNA is stabiized in the filament's interior. The ATP-DnaA-oriC complex binds and stabilizes one strand of the AT-rich DNA unwinding element (DUE), permitting loading of DNA polymerase. After initiation quickly degrades to an ADP-DnaA complex that is not apt for DNA replication. Binds acidic phospholipids. The protein is Chromosomal replication initiator protein DnaA of Oenococcus oeni (strain ATCC BAA-331 / PSU-1).